Here is a 700-residue protein sequence, read N- to C-terminus: MCEENENKDSEYIETTPVENGYNSERFKHLWFLCENCETLIYKKSLLEQKGVCAECGATLQMTSSERIELLIDNGTWRSINTKLSSIDVLEKKHTTFDIKMVRKVSILLYKVISGKYFYKEFFKNKYYNKALRILVAYNNTLVNILKVALGSKFIKYLNLDSKETIKILQDIIDTGLKTAQFALFEIRKKIKNEFYRFALLNKAFENKQISSLLAQNLEDRRDDESEIISIEFDRMAFRVQTFLILESLLKLNTQLADVKEQLLSQDKFLKAVATSLVKKELYFPEDKRKTRKIKKIFPFYPGTDPETDYFLWLRTHMAISLMERYLVLKEFKYWFRNRYCGLLEEEFPRFGSDILIEYVKKQDRYESYNMIDHIMQDDLHTSTNSVELFQQINLLFHHKNNEKDCDNNFLSYTENTKGIYFCLLEIMKQFSTLTLDSKDKFPKKKGRDTKDTEDIEDIDEEDIEEEYPLTYDSLTKEEKEYVDANIELIKSTFNLGKEEFIETEEQSYQDYNTSYQKETGLPDAIQTGVGEINGISVALGVMDFQFMGGSMGSVVGEKITRLIQFATENFLPLILVCASGGARMQEGSFSLMQMNKIAAMLHTYQKEKNLLYISVLTSPTTGGVTASFGMLANVTIVEPNAYIAFAGKRVIEQTLNQIVDDEDQISDSLFDFGMFDSMVPRALLKNVLSETIEIYMYGD.

Zn(2+)-binding residues include cysteine 34, cysteine 37, cysteine 53, and cysteine 56. The C4-type zinc-finger motif lies at 34 to 56; the sequence is CENCETLIYKKSLLEQKGVCAEC. The CoA carboxyltransferase N-terminal domain occupies 445–700; it reads KKGRDTKDTE…ETIEIYMYGD (256 aa).

This sequence belongs to the AccD/PCCB family. As to quaternary structure, acetyl-CoA carboxylase is a heterohexamer composed of biotin carboxyl carrier protein, biotin carboxylase and 2 subunits each of ACCase subunit alpha and ACCase plastid-coded subunit beta (accD). It depends on Zn(2+) as a cofactor.

The protein localises to the plastid. The protein resides in the chloroplast stroma. It catalyses the reaction N(6)-carboxybiotinyl-L-lysyl-[protein] + acetyl-CoA = N(6)-biotinyl-L-lysyl-[protein] + malonyl-CoA. It participates in lipid metabolism; malonyl-CoA biosynthesis; malonyl-CoA from acetyl-CoA: step 1/1. In terms of biological role, component of the acetyl coenzyme A carboxylase (ACC) complex. Biotin carboxylase (BC) catalyzes the carboxylation of biotin on its carrier protein (BCCP) and then the CO(2) group is transferred by the transcarboxylase to acetyl-CoA to form malonyl-CoA. The polypeptide is Acetyl-coenzyme A carboxylase carboxyl transferase subunit beta, chloroplastic (Cryptomeria japonica (Japanese cedar)).